The chain runs to 208 residues: Holliday junction resolvase RecU (208 aa).

T87, D89, E102, and Q121 together coordinate Mg(2+).

The protein belongs to the RecU family. It depends on Mg(2+) as a cofactor.

It localises to the cytoplasm. The enzyme catalyses Endonucleolytic cleavage at a junction such as a reciprocal single-stranded crossover between two homologous DNA duplexes (Holliday junction).. In terms of biological role, endonuclease that resolves Holliday junction intermediates in genetic recombination. Cleaves mobile four-strand junctions by introducing symmetrical nicks in paired strands. Promotes annealing of linear ssDNA with homologous dsDNA. Required for DNA repair, homologous recombination and chromosome segregation. This is Holliday junction resolvase RecU from Staphylococcus aureus (strain MRSA252).